A 181-amino-acid chain; its full sequence is ATP-dependent protease subunit HslV (181 aa).

Thr5 is a catalytic residue. Residues Ala161, Cys164, and Thr167 each coordinate Na(+).

Belongs to the peptidase T1B family. HslV subfamily. In terms of assembly, a double ring-shaped homohexamer of HslV is capped on each side by a ring-shaped HslU homohexamer. The assembly of the HslU/HslV complex is dependent on binding of ATP.

It is found in the cytoplasm. The enzyme catalyses ATP-dependent cleavage of peptide bonds with broad specificity.. Allosterically activated by HslU binding. Protease subunit of a proteasome-like degradation complex believed to be a general protein degrading machinery. The chain is ATP-dependent protease subunit HslV from Sulfurimonas denitrificans (strain ATCC 33889 / DSM 1251) (Thiomicrospira denitrificans (strain ATCC 33889 / DSM 1251)).